Reading from the N-terminus, the 288-residue chain is Bifunctional protein FolD (288 aa).

NADP(+) is bound by residues 164–166 and V230; that span reads GRS.

The protein belongs to the tetrahydrofolate dehydrogenase/cyclohydrolase family. Homodimer.

The catalysed reaction is (6R)-5,10-methylene-5,6,7,8-tetrahydrofolate + NADP(+) = (6R)-5,10-methenyltetrahydrofolate + NADPH. The enzyme catalyses (6R)-5,10-methenyltetrahydrofolate + H2O = (6R)-10-formyltetrahydrofolate + H(+). Its pathway is one-carbon metabolism; tetrahydrofolate interconversion. Its function is as follows. Catalyzes the oxidation of 5,10-methylenetetrahydrofolate to 5,10-methenyltetrahydrofolate and then the hydrolysis of 5,10-methenyltetrahydrofolate to 10-formyltetrahydrofolate. The polypeptide is Bifunctional protein FolD (Thermomicrobium roseum (strain ATCC 27502 / DSM 5159 / P-2)).